Consider the following 161-residue polypeptide: Deoxyuridine 5'-triphosphate nucleotidohydrolase (161 aa).

Residues 80–82, N93, 97–99, and K107 contribute to the substrate site; these read RSG and TVD.

Belongs to the dUTPase family. The cofactor is Mg(2+).

The catalysed reaction is dUTP + H2O = dUMP + diphosphate + H(+). The protein operates within pyrimidine metabolism; dUMP biosynthesis; dUMP from dCTP (dUTP route): step 2/2. In terms of biological role, this enzyme is involved in nucleotide metabolism: it produces dUMP, the immediate precursor of thymidine nucleotides and it decreases the intracellular concentration of dUTP so that uracil cannot be incorporated into DNA. The polypeptide is Deoxyuridine 5'-triphosphate nucleotidohydrolase (Mesorhizobium japonicum (strain LMG 29417 / CECT 9101 / MAFF 303099) (Mesorhizobium loti (strain MAFF 303099))).